Here is a 717-residue protein sequence, read N- to C-terminus: Glycine--tRNA ligase beta subunit (717 aa).

It belongs to the class-II aminoacyl-tRNA synthetase family. Tetramer of two alpha and two beta subunits.

It localises to the cytoplasm. The catalysed reaction is tRNA(Gly) + glycine + ATP = glycyl-tRNA(Gly) + AMP + diphosphate. This is Glycine--tRNA ligase beta subunit from Agrobacterium fabrum (strain C58 / ATCC 33970) (Agrobacterium tumefaciens (strain C58)).